The primary structure comprises 304 residues: Phosphoribosylaminoimidazole-succinocarboxamide synthase (304 aa).

Belongs to the SAICAR synthetase family.

The enzyme catalyses 5-amino-1-(5-phospho-D-ribosyl)imidazole-4-carboxylate + L-aspartate + ATP = (2S)-2-[5-amino-1-(5-phospho-beta-D-ribosyl)imidazole-4-carboxamido]succinate + ADP + phosphate + 2 H(+). It functions in the pathway purine metabolism; IMP biosynthesis via de novo pathway; 5-amino-1-(5-phospho-D-ribosyl)imidazole-4-carboxamide from 5-amino-1-(5-phospho-D-ribosyl)imidazole-4-carboxylate: step 1/2. This is Phosphoribosylaminoimidazole-succinocarboxamide synthase from Corynebacterium efficiens (strain DSM 44549 / YS-314 / AJ 12310 / JCM 11189 / NBRC 100395).